We begin with the raw amino-acid sequence, 52 residues long: Large ribosomal subunit protein bL33 (52 aa).

It belongs to the bacterial ribosomal protein bL33 family.

This is Large ribosomal subunit protein bL33 from Chlamydia trachomatis serovar A (strain ATCC VR-571B / DSM 19440 / HAR-13).